The primary structure comprises 61 residues: Small ribosomal subunit protein uS14 (61 aa).

Residues cysteine 24, cysteine 27, cysteine 40, and cysteine 43 each coordinate Zn(2+).

This sequence belongs to the universal ribosomal protein uS14 family. Zinc-binding uS14 subfamily. As to quaternary structure, part of the 30S ribosomal subunit. Contacts proteins S3 and S10. Zn(2+) is required as a cofactor.

Binds 16S rRNA, required for the assembly of 30S particles and may also be responsible for determining the conformation of the 16S rRNA at the A site. The protein is Small ribosomal subunit protein uS14 of Alkaliphilus metalliredigens (strain QYMF).